Consider the following 156-residue polypeptide: Toxin Res (156 aa).

It belongs to the MbcT/ParT/Res family. As to quaternary structure, homodimer. Forms a complex with cognate antitoxin Xre.

Functionally, toxic component of a type II toxin-antitoxin (TA) system. Expression in E.coli inhibits cell growth; bacteriostasis is neutralized by expression of cognate antitoxin Xre. Expression in E.coli leads to almost complete depletion of intracellular NAD(+): NAD(+) levels are partially restored when coexpressed with antitoxin Xre. This is Toxin Res from Photorhabdus laumondii subsp. laumondii (strain DSM 15139 / CIP 105565 / TT01) (Photorhabdus luminescens subsp. laumondii).